Here is a 517-residue protein sequence, read N- to C-terminus: DNA relaxase MbeA (517 aa).

Tyrosine 19 acts as the O-(5'-phospho-DNA)-tyrosine intermediate in catalysis. A divalent metal cation is bound by residues histidine 97, glutamate 104, and asparagine 106. Disordered regions lie at residues 281-310 (YSPV…QEGR), 380-405 (PSVR…VTQS), and 496-517 (SLER…SLGW). The span at 297–310 (GRGERGDDAAQEGR) shows a compositional bias: basic and acidic residues. Residues 496-510 (SLERERQPEIQERTL) are compositionally biased toward basic and acidic residues.

The protein to E.coli MbaA and MbkA. As to quaternary structure, interacts with MbeB and MbeC to form the relaxosome. Mn(2+) is required as a cofactor. Co(2+) serves as cofactor. It depends on Ni(2+) as a cofactor.

It carries out the reaction ATP-independent breakage of single-stranded DNA, followed by passage and rejoining.. In terms of biological role, relaxase involved in plasmid ColE1 conjugative mobilization and is thus essential to promote the specific transfer of the plasmid during conjugation. First catalyzes the specific cleavage of one of the DNA strands at oriT, forming a covalent 5'-phosphotyrosine intermediate. The nic site corresponds to 5'-(1469)CTGG/CTTA(1462)-3' in the cleaved strand. The cleaved strand is then transferred through the dedicated type IV secretion apparatus. MbeA remains covalently linked at the 5' end of the strand, and once in the recipient cell, it probably catalyzes the rejoining of the two ends of the strand, re-forming the circular plasmid DNA. Is functional in vitro without a requirement for the conjugative accessory proteins. The chain is DNA relaxase MbeA (mbeA) from Escherichia coli.